A 323-amino-acid polypeptide reads, in one-letter code: Cyclin-H (323 aa).

A Phosphoserine; by CDK8 modification is found at S5. S132 carries the post-translational modification Phosphoserine. A disordered region spans residues 296 to 323 (GYEDDDYVSKKPKQEEEEWTDDDLVDAL). Residue S304 is modified to Phosphoserine; by CDK8. The segment covering 310–323 (EEEEWTDDDLVDAL) has biased composition (acidic residues). T315 carries the phosphothreonine modification.

It belongs to the cyclin family. Cyclin C subfamily. As to quaternary structure, associates primarily with CDK7 and MAT1 to form the CAK complex. CAK can further associate with the core-TFIIH to form the TFIIH basal transcription factor.

The protein localises to the nucleus. In terms of biological role, regulates CDK7, the catalytic subunit of the CDK-activating kinase (CAK) enzymatic complex. CAK activates the cyclin-associated kinases CDK1, CDK2, CDK4 and CDK6 by threonine phosphorylation. CAK complexed to the core-TFIIH basal transcription factor activates RNA polymerase II by serine phosphorylation of the repetitive C-terminal domain (CTD) of its large subunit (POLR2A), allowing its escape from the promoter and elongation of the transcripts. Involved in cell cycle control and in RNA transcription by RNA polymerase II. Its expression and activity are constant throughout the cell cycle. The sequence is that of Cyclin-H (Ccnh) from Rattus norvegicus (Rat).